Consider the following 740-residue polypeptide: Polyribonucleotide nucleotidyltransferase (740 aa).

2 residues coordinate Mg(2+): D514 and D520. One can recognise a KH domain in the interval 580–639 (PRIITVKIPVDKIGEVIGPKRQMINQIQEDTGAEITIEDDGTIYIGAADGPAAEAARATI). In terms of domain architecture, S1 motif spans 651-723 (GERILGSVVK…SRGKLSLIPV (73 aa)).

It belongs to the polyribonucleotide nucleotidyltransferase family. In terms of assembly, homotrimer. It depends on Mg(2+) as a cofactor.

The protein resides in the cytoplasm. It carries out the reaction RNA(n+1) + phosphate = RNA(n) + a ribonucleoside 5'-diphosphate. Its function is as follows. Involved in mRNA degradation. Catalyzes the phosphorolysis of single-stranded polyribonucleotides processively in the 3'- to 5'-direction. The chain is Polyribonucleotide nucleotidyltransferase from Streptomyces antibioticus.